Reading from the N-terminus, the 371-residue chain is GTPase Obg (371 aa).

Residues 1–159 form the Obg domain; sequence MKFVDEAYID…KNLKLELKVL (159 aa). Residues 160–334 form the OBG-type G domain; the sequence is ADVGLLGMPN…LIRTIYKHVH (175 aa). Residues 166 to 173, 191 to 195, 213 to 216, 284 to 287, and 315 to 317 each bind GTP; these read GMPNAGKS, FTTLH, DIPG, NKLD, and SAL. Mg(2+) is bound by residues Ser-173 and Thr-193.

This sequence belongs to the TRAFAC class OBG-HflX-like GTPase superfamily. OBG GTPase family. Monomer. It depends on Mg(2+) as a cofactor.

It is found in the cytoplasm. Functionally, an essential GTPase which binds GTP, GDP and possibly (p)ppGpp with moderate affinity, with high nucleotide exchange rates and a fairly low GTP hydrolysis rate. Plays a role in control of the cell cycle, stress response, ribosome biogenesis and in those bacteria that undergo differentiation, in morphogenesis control. This is GTPase Obg from Delftia acidovorans (strain DSM 14801 / SPH-1).